The following is a 463-amino-acid chain: UDP-N-acetylmuramoylalanine--D-glutamate ligase (463 aa).

Residue 116–122 (GTNGKTT) coordinates ATP.

This sequence belongs to the MurCDEF family.

The protein localises to the cytoplasm. The catalysed reaction is UDP-N-acetyl-alpha-D-muramoyl-L-alanine + D-glutamate + ATP = UDP-N-acetyl-alpha-D-muramoyl-L-alanyl-D-glutamate + ADP + phosphate + H(+). It functions in the pathway cell wall biogenesis; peptidoglycan biosynthesis. Cell wall formation. Catalyzes the addition of glutamate to the nucleotide precursor UDP-N-acetylmuramoyl-L-alanine (UMA). The polypeptide is UDP-N-acetylmuramoylalanine--D-glutamate ligase (Synechococcus elongatus (strain ATCC 33912 / PCC 7942 / FACHB-805) (Anacystis nidulans R2)).